The sequence spans 600 residues: Glutamine--fructose-6-phosphate aminotransferase [isomerizing] (600 aa).

Catalysis depends on cysteine 2, which acts as the Nucleophile; for GATase activity. The region spanning 2 to 217 is the Glutamine amidotransferase type-2 domain; the sequence is CGIVGYIGQL…DKEMVIVTDK (216 aa). 2 consecutive SIS domains span residues 283–422 and 452–590; these read ISNA…SRGK and IARE…VDKP. The For Fru-6P isomerization activity role is filled by lysine 595.

Homodimer.

Its subcellular location is the cytoplasm. It carries out the reaction D-fructose 6-phosphate + L-glutamine = D-glucosamine 6-phosphate + L-glutamate. In terms of biological role, catalyzes the first step in hexosamine metabolism, converting fructose-6P into glucosamine-6P using glutamine as a nitrogen source. This Bacillus licheniformis (strain ATCC 14580 / DSM 13 / JCM 2505 / CCUG 7422 / NBRC 12200 / NCIMB 9375 / NCTC 10341 / NRRL NRS-1264 / Gibson 46) protein is Glutamine--fructose-6-phosphate aminotransferase [isomerizing].